The sequence spans 89 residues: uncharacterized protein (89 aa).

This is an uncharacterized protein from Dictyostelium discoideum (Social amoeba).